The primary structure comprises 178 residues: Large ribosomal subunit protein uL6 (178 aa).

The protein belongs to the universal ribosomal protein uL6 family. In terms of assembly, part of the 50S ribosomal subunit.

This protein binds to the 23S rRNA, and is important in its secondary structure. It is located near the subunit interface in the base of the L7/L12 stalk, and near the tRNA binding site of the peptidyltransferase center. The protein is Large ribosomal subunit protein uL6 of Streptococcus pyogenes serotype M3 (strain ATCC BAA-595 / MGAS315).